The sequence spans 97 residues: Large ribosomal subunit protein bL28 (97 aa).

The interval 1-20 is disordered; that stretch reads MSRRCELTAKGPQVGHKVSH.

Belongs to the bacterial ribosomal protein bL28 family.

This chain is Large ribosomal subunit protein bL28, found in Afipia carboxidovorans (strain ATCC 49405 / DSM 1227 / KCTC 32145 / OM5) (Oligotropha carboxidovorans).